The primary structure comprises 1405 residues: Rho guanine nucleotide exchange factor 18 (1405 aa).

3 disordered regions span residues 1–47 (MGSE…EDGF), 92–115 (ETHRQEARRESSHTSCEGASALPQ), and 289–330 (PGKS…PGKR). 2 stretches are compositionally biased toward basic and acidic residues: residues 92–103 (ETHRQEARRESS) and 308–330 (RQKEKGKSPAHLKDKTQDLPGKR). Residues 347-372 (SSCPLCGEPLLNSASLKEHPRTTLLS) form a C2H2-type; degenerate zinc finger. In terms of domain architecture, DH spans 485–682 (KRQDVLYELM…KDIISQVDAK (198 aa)). Positions 723–825 (QLHLEGALCW…WMAHIRRAVE (103 aa)) constitute a PH domain. The disordered stretch occupies residues 936 to 1016 (QVEEGSVSAG…PQAVEMPSTE (81 aa)). Thr-952 is subject to Phosphothreonine. Ser-961 is subject to Phosphoserine. Residues 1084–1181 (FEKQREERAG…RERLELLRRF (98 aa)) are a coiled coil. 3 disordered regions span residues 1198-1242 (EAQP…VERP), 1274-1309 (RQTAVQQQIPTKLAASTKGGKEKGSKSRGSQRWESS), and 1328-1405 (ESAS…VIFF). 2 positions are modified to phosphoserine: Ser-1336 and Ser-1338. Residues 1355–1365 (FPAPSPAPAAT) show a composition bias toward pro residues. The segment covering 1375-1394 (TSLPPVSPASSLPTTPLATT) has biased composition (low complexity). Residues 1396–1405 (EVSKEDVIFF) show a composition bias toward basic and acidic residues.

Interacts with SEPT9; interaction may inhibit GEF activity. Interacts with Gbetagamma subunits GNB1 and GNG2. Interacts with EPB41L4B. Interacts with PATJ (via C-terminus).

The protein resides in the cytoplasm. It localises to the cytoskeleton. Its subcellular location is the cell membrane. It is found in the apical cell membrane. In terms of biological role, acts as a guanine nucleotide exchange factor (GEF) for RhoA GTPases. May play a role in actin cytoskeleton reorganization in different tissues since its activation induces formation of actin stress fibers. Also acts as a GEF for RAC1, inducing production of reactive oxygen species (ROS). Does not act as a GEF for CDC42. The G protein beta-gamma (Gbetagamma) subunits of heterotrimeric G proteins act as activators, explaining the integrated effects of LPA and other G-protein coupled receptor agonists on actin stress fiber formation, cell shape change and ROS production. Required for EPB41L4B-mediated regulation of the circumferential actomyosin belt in epithelial cells. This Mus musculus (Mouse) protein is Rho guanine nucleotide exchange factor 18 (Arhgef18).